An 842-amino-acid chain; its full sequence is Alanine--tRNA ligase (842 aa).

His-549, His-553, Cys-650, and His-654 together coordinate Zn(2+).

Belongs to the class-II aminoacyl-tRNA synthetase family. Zn(2+) serves as cofactor.

The protein localises to the cytoplasm. It catalyses the reaction tRNA(Ala) + L-alanine + ATP = L-alanyl-tRNA(Ala) + AMP + diphosphate. Its function is as follows. Catalyzes the attachment of alanine to tRNA(Ala) in a two-step reaction: alanine is first activated by ATP to form Ala-AMP and then transferred to the acceptor end of tRNA(Ala). Also edits incorrectly charged Ser-tRNA(Ala) and Gly-tRNA(Ala) via its editing domain. The sequence is that of Alanine--tRNA ligase from Campylobacter jejuni subsp. jejuni serotype O:2 (strain ATCC 700819 / NCTC 11168).